A 178-amino-acid polypeptide reads, in one-letter code: Large ribosomal subunit protein uL10 (178 aa).

This sequence belongs to the universal ribosomal protein uL10 family. Part of the ribosomal stalk of the 50S ribosomal subunit. The N-terminus interacts with L11 and the large rRNA to form the base of the stalk. The C-terminus forms an elongated spine to which L12 dimers bind in a sequential fashion forming a multimeric L10(L12)X complex.

Its function is as follows. Forms part of the ribosomal stalk, playing a central role in the interaction of the ribosome with GTP-bound translation factors. The protein is Large ribosomal subunit protein uL10 of Stenotrophomonas maltophilia (strain R551-3).